Consider the following 169-residue polypeptide: Ribosome maturation factor RimM (169 aa).

A PRC barrel domain is found at 94 to 167 (ENEFYFHEII…KITIEVMEGL (74 aa)).

This sequence belongs to the RimM family. Binds ribosomal protein uS19.

It localises to the cytoplasm. In terms of biological role, an accessory protein needed during the final step in the assembly of 30S ribosomal subunit, possibly for assembly of the head region. Essential for efficient processing of 16S rRNA. May be needed both before and after RbfA during the maturation of 16S rRNA. It has affinity for free ribosomal 30S subunits but not for 70S ribosomes. This Listeria monocytogenes serotype 4b (strain F2365) protein is Ribosome maturation factor RimM.